The primary structure comprises 565 residues: Sulfite reductase [NADPH] hemoprotein beta-component (565 aa).

The [4Fe-4S] cluster site is built by Cys429, Cys435, Cys474, and Cys478. Cys478 is a binding site for siroheme.

The protein belongs to the nitrite and sulfite reductase 4Fe-4S domain family. Alpha(8)-beta(8). The alpha component is a flavoprotein, the beta component is a hemoprotein. Siroheme is required as a cofactor. [4Fe-4S] cluster serves as cofactor.

The enzyme catalyses hydrogen sulfide + 3 NADP(+) + 3 H2O = sulfite + 3 NADPH + 4 H(+). It participates in sulfur metabolism; hydrogen sulfide biosynthesis; hydrogen sulfide from sulfite (NADPH route): step 1/1. Component of the sulfite reductase complex that catalyzes the 6-electron reduction of sulfite to sulfide. This is one of several activities required for the biosynthesis of L-cysteine from sulfate. The sequence is that of Sulfite reductase [NADPH] hemoprotein beta-component from Shewanella putrefaciens (strain CN-32 / ATCC BAA-453).